The primary structure comprises 75 residues: Small ribosomal subunit protein bS18c (75 aa).

This sequence belongs to the bacterial ribosomal protein bS18 family. Part of the 30S ribosomal subunit.

It is found in the plastid. The protein localises to the chloroplast. This chain is Small ribosomal subunit protein bS18c, found in Angiopteris evecta (Mule's foot fern).